The primary structure comprises 410 residues: TNF receptor-associated factor family protein DDB_G0279745 (410 aa).

The segment at 27–67 (CVICSFPLFDGLQCKRGHGACKSCWEKIIGENGKKECHSCR) adopts an RING-type; degenerate zinc-finger fold. TRAF-type zinc fingers lie at residues 81–154 (YLEK…SLEQ) and 154–213 (QHQN…DESI). A coiled-coil region spans residues 216 to 284 (LSNSIVEIQK…SMINKLDDSA (69 aa)).

Belongs to the TNF receptor-associated factor family.

It is found in the cytoplasm. Functionally, probable adapter protein and signal transducer that links members of the tumor necrosis factor receptor family to different signaling pathways by association with the receptor cytoplasmic domain and kinases. The sequence is that of TNF receptor-associated factor family protein DDB_G0279745 from Dictyostelium discoideum (Social amoeba).